Here is a 338-residue protein sequence, read N- to C-terminus: Solute carrier family 35 member G5 (338 aa).

The segment at 1-28 (MAGSHPYFNLPDSTHPSPPSGPPSLRWH) is disordered. Helical transmembrane passes span 37–57 (TNGLLVALLGGGLPAGFVGPL), 67–87 (LPSLELLICRCLFHLPIALLL), 105–125 (CFCALLNVLSIGCAYSAVQVV), 160–180 (CGLLGSILGLIIIVGPGLWTL), 190–210 (ALGYVQAFLGGLALSLGLLVY), 221–241 (TVAFLSGLVGLLGSVPGLFVL), 250–270 (LLSWSCVGAVGILTLVSFTCV), 281–301 (LVCAVLHSEVVVALILQYYML), and 310–330 (IMGAGVVLGNITIIPAWNLSC). The EamA 1 domain maps to 49–174 (LPAGFVGPLS…SILGLIIIVG (126 aa)). Positions 272 to 325 (YAVTKAHPALVCAVLHSEVVVALILQYYMLPETVAPSDIMGAGVVLGNITIIPA) constitute an EamA 2 domain.

This sequence belongs to the SLC35G solute transporter family.

The protein resides in the membrane. The protein is Solute carrier family 35 member G5 (SLC35G5) of Gorilla gorilla gorilla (Western lowland gorilla).